A 343-amino-acid chain; its full sequence is Uroporphyrinogen decarboxylase (343 aa).

Residues 25–29 (RQAGR), Phe44, Asp75, Tyr150, Ser205, and His320 contribute to the substrate site.

It belongs to the uroporphyrinogen decarboxylase family. Homodimer.

It localises to the cytoplasm. The enzyme catalyses uroporphyrinogen III + 4 H(+) = coproporphyrinogen III + 4 CO2. The protein operates within porphyrin-containing compound metabolism; protoporphyrin-IX biosynthesis; coproporphyrinogen-III from 5-aminolevulinate: step 4/4. In terms of biological role, catalyzes the decarboxylation of four acetate groups of uroporphyrinogen-III to yield coproporphyrinogen-III. The protein is Uroporphyrinogen decarboxylase of Mesorhizobium japonicum (strain LMG 29417 / CECT 9101 / MAFF 303099) (Mesorhizobium loti (strain MAFF 303099)).